A 420-amino-acid chain; its full sequence is Protein-lysine N-trimethyltransferase SMYD5 (420 aa).

The SET domain occupies 29 to 358 (AEARFISSAK…AGEEICISYL (330 aa)). The MYND-type zinc-finger motif lies at 104 to 142 (PEQCSIRKDLHQQCPRCQVTYCSAECRQAALEQYHQVLC). S-adenosyl-L-methionine is bound at residue tyrosine 357. The disordered stretch occupies residues 392 to 420 (DDPDVTSDEEEEAEGETDDAELEDEMTDV).

The protein belongs to the class V-like SAM-binding methyltransferase superfamily.

Its subcellular location is the cytoplasm. The catalysed reaction is L-lysyl-[protein] + 3 S-adenosyl-L-methionine = N(6),N(6),N(6)-trimethyl-L-lysyl-[protein] + 3 S-adenosyl-L-homocysteine + 3 H(+). It catalyses the reaction L-lysyl(20)-[histone H4] + 3 S-adenosyl-L-methionine = N(6),N(6),N(6)-trimethyl-L-lysyl(20)-[histone H4] + 3 S-adenosyl-L-homocysteine + 3 H(+). It carries out the reaction L-lysyl(36)-[histone H3] + 3 S-adenosyl-L-methionine = N(6),N(6),N(6)-trimethyl-L-lysyl(36)-[histone H3] + 3 S-adenosyl-L-homocysteine + 3 H(+). Protein-lysine N-trimethyltransferase that specifically catalyzes trimethylation of 'Lys-22' of the RPL40/eL40 subunit of the 60S ribosome, thereby promoting translation elongation and protein synthesis. May also act as a histone methyltransferase in the context of histone octamers, but not on nucleosome substrates: trimethylates 'Lys-36' of histone H3 and 'Lys-20' of histone H4 to form H3K36me3 and H4K20me3, respectively. The histone methyltransferase activity, which is independent of its SET domain, is however unsure in vivo. This is Protein-lysine N-trimethyltransferase SMYD5 (SMYD5) from Gallus gallus (Chicken).